Reading from the N-terminus, the 355-residue chain is Peptide chain release factor 1 (355 aa).

Gln-231 is subject to N5-methylglutamine. The segment at 283 to 303 (LAKESEARKSQVGSGDRSERI) is disordered.

Belongs to the prokaryotic/mitochondrial release factor family. Methylated by PrmC. Methylation increases the termination efficiency of RF1.

The protein resides in the cytoplasm. In terms of biological role, peptide chain release factor 1 directs the termination of translation in response to the peptide chain termination codons UAG and UAA. The polypeptide is Peptide chain release factor 1 (Campylobacter lari (strain RM2100 / D67 / ATCC BAA-1060)).